A 97-amino-acid chain; its full sequence is uncharacterized protein (97 aa).

Basic and acidic residues predominate over residues 1–20 (MAKEQTDRTTLDLFAHERRP). A disordered region spans residues 1–30 (MAKEQTDRTTLDLFAHERRPGRPKTNPLSR).

This is an uncharacterized protein from Escherichia coli O157:H7.